Here is a 122-residue protein sequence, read N- to C-terminus: Large ribosomal subunit protein uL14 (122 aa).

Belongs to the universal ribosomal protein uL14 family. As to quaternary structure, part of the 50S ribosomal subunit. Forms a cluster with proteins L3 and L19. In the 70S ribosome, L14 and L19 interact and together make contacts with the 16S rRNA in bridges B5 and B8.

Its function is as follows. Binds to 23S rRNA. Forms part of two intersubunit bridges in the 70S ribosome. In Nitratiruptor sp. (strain SB155-2), this protein is Large ribosomal subunit protein uL14.